The chain runs to 490 residues: MARFPRQQLYIHGAYVDASSNQTFESINPANGEVLAEVAEAGAADLERAVESAEQGQRIWAALTGIERARIMRRAVDLLRERNDELALLETLDTGKPLSETRSVDIITGADVLEYYAGLAPAIEGEQIPLRDSSFVYTRREPLGVVAGIGAWNYPIQIALWKAAPALAAGNAMIFKPSEVTPLSALRLAEIFSEAGLPDGVFNVLTGSGAGVGALITEHPRIAKVSFTGGVATGKKVMASAAGSSLKDVTMELGGKSPLIVCEDADLDRAADIAVMANFFSSGQVCTNGTRVFIPAGLKASFEAKLLERVQRVRLGDPQQEATNFGPLVSFAHMDKVLDYIAQGKAAGARILCGGERVTEGEYARGAFVAPTIFSDCSDDMSIVREEIFGPVLSLLEYQGEDEAIRRANDTEYGLAAGVVTPDLARAHRIIHRLEAGICWINTWGESPAQMPVGGYKQSGIGRENGIASLAHYTRVKSVQVELGEFASVF.

Positions 26, 27, and 93 each coordinate K(+). Position 150–152 (150–152) interacts with NAD(+); sequence GAW. Lys-162 (charge relay system) is an active-site residue. 176 to 179 is a binding site for NAD(+); the sequence is KPSE. Val-180 is a binding site for K(+). 230-233 contacts NAD(+); the sequence is GVAT. A K(+)-binding site is contributed by Leu-246. The Proton acceptor role is filled by Glu-252. 3 residues coordinate NAD(+): Gly-254, Cys-286, and Glu-387. The active-site Nucleophile is Cys-286. At Cys-286 the chain carries Cysteine sulfenic acid (-SOH). K(+) is bound by residues Lys-457 and Gly-460. Glu-464 functions as the Charge relay system in the catalytic mechanism.

This sequence belongs to the aldehyde dehydrogenase family. As to quaternary structure, dimer of dimers. Requires K(+) as cofactor.

The enzyme catalyses betaine aldehyde + NAD(+) + H2O = glycine betaine + NADH + 2 H(+). Its pathway is amine and polyamine biosynthesis; betaine biosynthesis via choline pathway; betaine from betaine aldehyde: step 1/1. Functionally, involved in the biosynthesis of the osmoprotectant glycine betaine. Catalyzes the irreversible oxidation of betaine aldehyde to the corresponding acid. The chain is Betaine aldehyde dehydrogenase from Stutzerimonas stutzeri (strain A1501) (Pseudomonas stutzeri).